An 85-amino-acid chain; its full sequence is Small ribosomal subunit protein uS17 (85 aa).

It belongs to the universal ribosomal protein uS17 family. As to quaternary structure, part of the 30S ribosomal subunit.

One of the primary rRNA binding proteins, it binds specifically to the 5'-end of 16S ribosomal RNA. This chain is Small ribosomal subunit protein uS17, found in Mesoplasma florum (strain ATCC 33453 / NBRC 100688 / NCTC 11704 / L1) (Acholeplasma florum).